Consider the following 427-residue polypeptide: Enolase (427 aa).

Gln-163 lines the (2R)-2-phosphoglycerate pocket. Catalysis depends on Glu-205, which acts as the Proton donor. Mg(2+) contacts are provided by Asp-242, Glu-285, and Asp-312. Residues Lys-337, Arg-366, Ser-367, and Lys-388 each contribute to the (2R)-2-phosphoglycerate site. The active-site Proton acceptor is the Lys-337.

Belongs to the enolase family. Mg(2+) serves as cofactor.

It localises to the cytoplasm. It is found in the secreted. Its subcellular location is the cell surface. The enzyme catalyses (2R)-2-phosphoglycerate = phosphoenolpyruvate + H2O. The protein operates within carbohydrate degradation; glycolysis; pyruvate from D-glyceraldehyde 3-phosphate: step 4/5. In terms of biological role, catalyzes the reversible conversion of 2-phosphoglycerate (2-PG) into phosphoenolpyruvate (PEP). It is essential for the degradation of carbohydrates via glycolysis. This chain is Enolase, found in Rhodopseudomonas palustris (strain BisA53).